The sequence spans 432 residues: Adenylosuccinate synthetase (432 aa).

Residues 13–19 and 41–43 each bind GTP; these read GDEGKGK and GHT. Asp14 acts as the Proton acceptor in catalysis. Residues Asp14 and Gly41 each contribute to the Mg(2+) site. Residues 14-17, 39-42, Thr130, Arg144, Gln225, Thr240, and Arg304 each bind IMP; these read DEGK and NAGH. The active-site Proton donor is the His42. Residue 300 to 306 participates in substrate binding; sequence ATTGRKR. GTP-binding positions include Arg306, 332 to 334, and 415 to 417; these read KLD and STG.

It belongs to the adenylosuccinate synthetase family. As to quaternary structure, homodimer. Requires Mg(2+) as cofactor.

It is found in the cytoplasm. It carries out the reaction IMP + L-aspartate + GTP = N(6)-(1,2-dicarboxyethyl)-AMP + GDP + phosphate + 2 H(+). It participates in purine metabolism; AMP biosynthesis via de novo pathway; AMP from IMP: step 1/2. Plays an important role in the de novo pathway of purine nucleotide biosynthesis. Catalyzes the first committed step in the biosynthesis of AMP from IMP. This chain is Adenylosuccinate synthetase, found in Photobacterium profundum (strain SS9).